The sequence spans 320 residues: Glucosaminate ammonia-lyase (320 aa).

36–43 (TGMQAGGQ) contributes to the FAD binding site. An intrachain disulfide couples Cys136 to Cys139. 285–294 (DVADHVYRQA) contributes to the FAD binding site.

Belongs to the class-II pyridine nucleotide-disulfide oxidoreductase family.

It catalyses the reaction 2-amino-2-deoxy-D-gluconate = 2-dehydro-3-deoxy-D-gluconate + NH4(+). Its function is as follows. Catalyzes the conversion of 2-amino-2-deoxy-D-gluconate (GlcNA) to 2-keto-3-deoxy-D-gluconic acid (KDGA) and ammonia. The sequence is that of Glucosaminate ammonia-lyase from Pseudomonas fluorescens.